Reading from the N-terminus, the 485-residue chain is BTB/POZ domain-containing protein YLR108C (485 aa).

The BTB domain maps to 26–121 (EVFKIRIGQK…LIKEYDYHFT (96 aa)).

The protein localises to the nucleus. The sequence is that of BTB/POZ domain-containing protein YLR108C from Saccharomyces cerevisiae (strain ATCC 204508 / S288c) (Baker's yeast).